A 355-amino-acid chain; its full sequence is uncharacterized protein (355 aa).

132–139 (GPPGCGKT) is an ATP binding site.

The protein belongs to the AAA ATPase family.

The protein resides in the mitochondrion. This is an uncharacterized protein from Schizosaccharomyces pombe (strain 972 / ATCC 24843) (Fission yeast).